The chain runs to 260 residues: tRNA pseudouridine synthase A (260 aa).

The active-site Nucleophile is the Asp-52. Tyr-110 is a substrate binding site.

The protein belongs to the tRNA pseudouridine synthase TruA family. Homodimer.

The enzyme catalyses uridine(38/39/40) in tRNA = pseudouridine(38/39/40) in tRNA. Functionally, formation of pseudouridine at positions 38, 39 and 40 in the anticodon stem and loop of transfer RNAs. The chain is tRNA pseudouridine synthase A from Thiobacillus denitrificans (strain ATCC 25259 / T1).